The primary structure comprises 54 residues: Conotoxin vc5a (54 aa).

A signal peptide spans 1 to 14 (VILLLITSTPSVDA). A propeptide spanning residues 15–42 (RLKAKDNMPLASFHDNAKRTLQTRLINT) is cleaved from the precursor. A 4-hydroxyproline modification is found at Pro-49. Residue Ile-53 is modified to Isoleucine amide.

This sequence belongs to the conotoxin T superfamily. Contains 2 disulfide bonds that can be either 'C1-C3, C2-C4' or 'C1-C4, C2-C3', since these disulfide connectivities have been observed for conotoxins with cysteine framework V (for examples, see AC P0DQQ7 and AC P81755). In terms of tissue distribution, expressed by the venom duct.

The protein localises to the secreted. This is Conotoxin vc5a from Conus victoriae (Queen Victoria cone).